A 217-amino-acid polypeptide reads, in one-letter code: External core antigen (217 aa).

The first 20 residues, 1 to 20 (MYLFHLCLVFACVPCPTVQA), serve as a signal peptide directing secretion. The HBEAG stretch occupies residues 26-28 (GWL). Residues 166-217 (APILSTLPEHTVIRRRGGSRAARSPRRRTPSPRRRRSQSPRRRRSQSPASNC) form a disordered region. Basic residues predominate over residues 178-210 (IRRRGGSRAARSPRRRTPSPRRRRSQSPRRRRS). One copy of the 1; half-length repeat lies at 189–195 (SPRRRTP). The 3 X 8 AA repeats of S-P-R-R-R-R-S-Q stretch occupies residues 189 to 211 (SPRRRTPSPRRRRSQSPRRRRSQ). Residues 189 to 217 (SPRRRTPSPRRRRSQSPRRRRSQSPASNC) constitute a propeptide that is removed on maturation. 2 tandem repeats follow at residues 196–203 (SPRRRRSQ) and 204–211 (SPRRRRSQ).

Belongs to the orthohepadnavirus precore antigen family. As to quaternary structure, homodimerizes. Phosphorylated. In terms of processing, cleaved by host furin.

It is found in the secreted. The protein resides in the host nucleus. Functionally, may regulate immune response to the intracellular capsid in acting as a T-cell tolerogen, by having an immunoregulatory effect which prevents destruction of infected cells by cytotoxic T-cells. This immune regulation may predispose to chronicity during perinatal infections and prevent severe liver injury during adult infections. The chain is External core antigen from Otospermophilus beecheyi (California ground squirrel).